A 562-amino-acid polypeptide reads, in one-letter code: Putative transport protein ETA_21820 (562 aa).

A run of 5 helical transmembrane segments spans residues 8–28 (LLIG…LCLG), 32–52 (LGSV…LLGQ), 66–86 (FMLF…SIFF), 94–114 (MLAI…GKLF), and 158–178 (HLSL…IFGA). 2 RCK C-terminal domains span residues 202–288 (LDPD…SFRN) and 290–373 (KEVF…RIGF). The next 6 membrane-spanning stretches (helical) occupy residues 383–403 (LLAF…TFQF), 406–426 (FNFG…LGFL), 440–460 (ALTM…GLSA), 473–493 (LLML…CFLF), 503–523 (ALLF…EIIS), and 540–560 (AIAN…WPIL).

Belongs to the AAE transporter (TC 2.A.81) family. YbjL subfamily.

It localises to the cell membrane. This Erwinia tasmaniensis (strain DSM 17950 / CFBP 7177 / CIP 109463 / NCPPB 4357 / Et1/99) protein is Putative transport protein ETA_21820.